A 253-amino-acid polypeptide reads, in one-letter code: Imidazole glycerol phosphate synthase subunit HisF (253 aa).

Residues Asp-11 and Asp-130 contribute to the active site.

Belongs to the HisA/HisF family. In terms of assembly, heterodimer of HisH and HisF.

The protein resides in the cytoplasm. The catalysed reaction is 5-[(5-phospho-1-deoxy-D-ribulos-1-ylimino)methylamino]-1-(5-phospho-beta-D-ribosyl)imidazole-4-carboxamide + L-glutamine = D-erythro-1-(imidazol-4-yl)glycerol 3-phosphate + 5-amino-1-(5-phospho-beta-D-ribosyl)imidazole-4-carboxamide + L-glutamate + H(+). The protein operates within amino-acid biosynthesis; L-histidine biosynthesis; L-histidine from 5-phospho-alpha-D-ribose 1-diphosphate: step 5/9. Functionally, IGPS catalyzes the conversion of PRFAR and glutamine to IGP, AICAR and glutamate. The HisF subunit catalyzes the cyclization activity that produces IGP and AICAR from PRFAR using the ammonia provided by the HisH subunit. This is Imidazole glycerol phosphate synthase subunit HisF from Clostridium botulinum (strain Okra / Type B1).